We begin with the raw amino-acid sequence, 77 residues long: Large ribosomal subunit protein uL29 (77 aa).

The protein belongs to the universal ribosomal protein uL29 family.

This chain is Large ribosomal subunit protein uL29, found in Mycobacterium avium (strain 104).